A 508-amino-acid chain; its full sequence is Photosystem II CP47 reaction center protein (508 aa).

A run of 6 helical transmembrane segments spans residues Ala-21–Ser-36, Ile-101–Trp-115, Gly-140–Phe-156, Ile-203–Ser-218, Val-237–Val-252, and Thr-457–Arg-472.

This sequence belongs to the PsbB/PsbC family. PsbB subfamily. In terms of assembly, PSII is composed of 1 copy each of membrane proteins PsbA, PsbB, PsbC, PsbD, PsbE, PsbF, PsbH, PsbI, PsbJ, PsbK, PsbL, PsbM, PsbT, PsbX, PsbY, PsbZ, Psb30/Ycf12, at least 3 peripheral proteins of the oxygen-evolving complex and a large number of cofactors. It forms dimeric complexes. The cofactor is Binds multiple chlorophylls. PSII binds additional chlorophylls, carotenoids and specific lipids..

The protein localises to the plastid. It is found in the chloroplast thylakoid membrane. In terms of biological role, one of the components of the core complex of photosystem II (PSII). It binds chlorophyll and helps catalyze the primary light-induced photochemical processes of PSII. PSII is a light-driven water:plastoquinone oxidoreductase, using light energy to abstract electrons from H(2)O, generating O(2) and a proton gradient subsequently used for ATP formation. In Hordeum vulgare (Barley), this protein is Photosystem II CP47 reaction center protein.